Here is a 385-residue protein sequence, read N- to C-terminus: Phosphotransferase FrzJ (385 aa).

ATP contacts are provided by asparagine 38 and lysine 59. The active site involves aspartate 245.

It belongs to the methylthioribose kinase family. As to quaternary structure, monomer.

The catalysed reaction is (1S,3S,6S,7S,8S,9S)-6-[(4-methoxyphenyl)methyl]-3-(methylamino)-5-azatricyclo[6.3.1.0(1,5)]dodecane-7,9-diol + ATP = (-)-FR901483 + ADP + 2 H(+). It participates in secondary metabolite biosynthesis. Its function is as follows. Phosphotransferase; part of the gene cluster that mediates the biosynthesis of the alkaloid (-)-FR901483, a potent immunosuppressant that shows efficacy in animal models and a probable inhibitor of purine nucleotide biosynthesis by targeting phosphoribosylpyrophosphate amidotransferase (PPAT). FrzJ catalyzes the last step of the pathway by phosphorylating the C4'-OH of dephospho-(-)-FR901483 to produce (-)-FR901483. The biosynthesis of (-)-FR901483 starts with the condensation of two L-tyrosines to yield (S,S)-dityrosyl-piperazine. This process occurs in 3 steps with the non-canonical nonribosomal peptide synthetase FrzA catalyzing the reduction of L-tyrosine into L-tyrosinal, the spontaneous condensation of 2 L-tyrosinal units, and the subsequent reduction by the NmrA-like family domain-containing oxidoreductase FrzB. The cytochrome P450 monooxygenase FrzC then performs coupling between N10 and C1' to morph the piperazine into a 1,4-diazabicyclo[3.2.1]octane spiro-fused to a 2,5-cyclohexadienone. The dienone portion is further reduced to cyclohexanone by the flavin-dependent reductase FrzD. The methyltranserases (MTs) FrzE and FrzF are then involved in the methylation at the C10' amine and the C4 phenolic oxygen, respectively. The order of the two MTs appear to be interchangeable. Cleavage of the C9-N10' bond by the dioxygenase FrzG then leads to formation of a conjugated iminium. In addition to the oxidation of C9, an additional dehydrogenation between C7 and C8 can occur to give a likely shunt product. The next biosynthetic step is the intramolecular aldol condensation catalyzed by the newly identified aldolase FrzH to yield an aza-tricyclic product with the formation of a C9-C3' bond. The short-chain dehydrogenase/reductase FrzI then produces dephospho-(-)-FR901483 that is phosphorylated at C4'-OH into (-)-FR901483 by the phosphotransferase FrzJ. This is Phosphotransferase FrzJ from Cladobotryum sp.